A 221-amino-acid polypeptide reads, in one-letter code: MNNLRQEFIKFSVDTGVLRFGEFVTKAGRTSPYFFNAGLFNQGGTLARLADFYAQTLIDSGVEFDMLFGPAYKGITLASATAVALANKGRDVPFAFNRKEAKDHGEGGTMVGAKLQGRVVIIDDVISAGTSVRESVDMIRAAGATPCAVLIALDRMERSGADDALSAYSAVQEVSNTYGMPVISIGNLSDLFEYLSNAGADSEQAQYRDAVSAYRKRYGVT.

A 5-phospho-alpha-D-ribose 1-diphosphate-binding site is contributed by lysine 26. 34 to 35 (FF) is a binding site for orotate. 5-phospho-alpha-D-ribose 1-diphosphate-binding positions include 72–73 (YK), arginine 98, lysine 99, lysine 102, histidine 104, and 123–131 (DDVISAGTS). Orotate is bound by residues serine 127 and arginine 155.

The protein belongs to the purine/pyrimidine phosphoribosyltransferase family. PyrE subfamily. In terms of assembly, homodimer. It depends on Mg(2+) as a cofactor.

The catalysed reaction is orotidine 5'-phosphate + diphosphate = orotate + 5-phospho-alpha-D-ribose 1-diphosphate. It functions in the pathway pyrimidine metabolism; UMP biosynthesis via de novo pathway; UMP from orotate: step 1/2. Catalyzes the transfer of a ribosyl phosphate group from 5-phosphoribose 1-diphosphate to orotate, leading to the formation of orotidine monophosphate (OMP). The chain is Orotate phosphoribosyltransferase from Herminiimonas arsenicoxydans.